The primary structure comprises 447 residues: NADP-specific glutamate dehydrogenase (447 aa).

The substrate site is built by lysine 92, glutamine 113, and lysine 116. The Proton donor role is filled by lysine 128. Substrate is bound at residue glycine 167. Threonine 211 and asparagine 242 together coordinate NADP(+). Serine 380 contributes to the substrate binding site.

It belongs to the Glu/Leu/Phe/Val dehydrogenases family. Homohexamer.

The enzyme catalyses L-glutamate + NADP(+) + H2O = 2-oxoglutarate + NH4(+) + NADPH + H(+). Its function is as follows. Catalyzes the reversible oxidative deamination of glutamate to alpha-ketoglutarate and ammonia. The polypeptide is NADP-specific glutamate dehydrogenase (gdhA) (Salmonella typhimurium (strain LT2 / SGSC1412 / ATCC 700720)).